A 307-amino-acid chain; its full sequence is Heparan sulfate glucosamine 3-O-sulfotransferase 1 (307 aa).

The N-terminal stretch at 1–20 is a signal peptide; sequence MAALLLGAVLLVAQPQLVPS. Asn48 is a glycosylation site (N-linked (GlcNAc...) asparagine). Residues 64-68, Arg147, and Ser155 each bind 3'-phosphoadenylyl sulfate; that span reads KGGTR. N-linked (GlcNAc...) asparagine glycosylation is found at Asn192, Asn242, and Asn249. Position 255 (Tyr255) interacts with 3'-phosphoadenylyl sulfate. Cys256 and Cys265 are joined by a disulfide. Residue 270–274 participates in 3'-phosphoadenylyl sulfate binding; that stretch reads KGRAH.

It belongs to the sulfotransferase 1 family. In terms of tissue distribution, highly expressed in the brain and kidney and weakly expressed in the heart, lung and placenta.

It localises to the golgi apparatus lumen. The enzyme catalyses alpha-D-glucosaminyl-[heparan sulfate](n) + 3'-phosphoadenylyl sulfate = 3-sulfo-alpha-D-glucosaminyl-[heparan sulfate](n) + adenosine 3',5'-bisphosphate + H(+). Sulfotransferase that utilizes 3'-phospho-5'-adenylyl sulfate (PAPS) to catalyze the transfer of a sulfo group to position 3 of glucosamine residues in heparan. Catalyzes the rate limiting step in the biosynthesis of heparan sulfate (HSact). This modification is a crucial step in the biosynthesis of anticoagulant heparan sulfate as it completes the structure of the antithrombin pentasaccharide binding site. The polypeptide is Heparan sulfate glucosamine 3-O-sulfotransferase 1 (HS3ST1) (Homo sapiens (Human)).